Reading from the N-terminus, the 649-residue chain is Leucine-rich repeat transmembrane protein FLRT3 (649 aa).

A signal peptide spans 1-28 (MISAAWSIFLIGTKIGLFLQVAPLSVMA). In terms of domain architecture, LRRNT spans 29–58 (KSCPSVCRCDAGFIYCNDRFLTSIPTGIPE). Residues 29-528 (KSCPSVCRCD…KEPYKNPNLP (500 aa)) lie on the Extracellular side of the membrane. 2 disulfides stabilise this stretch: Cys-31/Cys-37 and Cys-35/Cys-44. The interval 38-67 (DAGFIYCNDRFLTSIPTGIPEDATTLYLQN) is interaction with ADGRL3. 10 LRR repeats span residues 59–80 (DATT…SDLK), 84–104 (KVER…NLPK), 105–126 (YVKE…SLSK), 129–150 (YLEE…EGAF), 155–175 (YLRL…GLPR), 176–197 (TIEE…SLQG), 200–220 (SLKR…GDKV), 226–247 (NLTE…LPGT), 248–269 (NLRK…AFSY), and 272–293 (QLYR…IFDD). Asn-226 carries N-linked (GlcNAc...) asparagine glycosylation. Residues Asn-282 and Asn-296 are each glycosylated (N-linked (GlcNAc...) asparagine). The LRRCT domain occupies 305 to 357 (NPWYCGCKMKWVRDWLQSLPVKVNVRGLMCQAPEKVRGMAIKDLNAELFDCKD). Residues Cys-309 and Cys-334 are joined by a disulfide bond. A disordered region spans residues 387-407 (KQPDIKNPKLTKDHQTTGSPS). The segment covering 389–401 (PDIKNPKLTKDHQ) has biased composition (basic and acidic residues). Residues 409-504 (KTITITVKSV…VCIETETAPL (96 aa)) enclose the Fibronectin type-III domain. A helical membrane pass occupies residues 529–549 (LAAIIGGAVALVTIALLALVC). Residues 550–649 (WYVHRNGSLF…GIPDSDHSHS (100 aa)) lie on the Cytoplasmic side of the membrane. The interval 622-649 (LYKNNHSESSSNRSYRDSGIPDSDHSHS) is disordered.

Monomer and homodimer. Self-associates (via leucine-rich repeats), giving rise to homooligomers. Interacts with FGFR1. Interacts (via extracellular domain) with ADGRL1/LPHN1 and LPHN2 (via olfactomedin-like domain). Interacts (via extracellular domain) with ADGRL3 (via olfactomedin-like domain); the interaction is direct. Interacts (via extracellular domain) with UNC5B and UNC5D (via extracellular domain); the interaction is direct. Identified in complexes composed of FLRT3, ADGRL3 and UNC5B, respectively FLRT3, ADGRL3 and UNC5D. May also interact (via extracellular domain) with UNC5A and UNC5C. Interacts (via cytoplasmic domain) with ROBO1. In terms of processing, N-glycosylated. Proteolytic cleavage in the juxtamembrane region gives rise to a soluble ectodomain. Cleavage is probably effected by a metalloprotease. As to expression, expressed in kidney, brain, pancreas, skeletal muscle, lung, liver, placenta, and heart.

Its subcellular location is the cell membrane. The protein resides in the presynaptic cell membrane. The protein localises to the endoplasmic reticulum membrane. It is found in the cell junction. It localises to the focal adhesion. Its subcellular location is the secreted. The protein resides in the cell projection. The protein localises to the axon. It is found in the growth cone membrane. Functionally, functions in cell-cell adhesion, cell migration and axon guidance, exerting an attractive or repulsive role depending on its interaction partners. Plays a role in the spatial organization of brain neurons. Plays a role in vascular development in the retina. Plays a role in cell-cell adhesion via its interaction with ADGRL3 and probably also other latrophilins that are expressed at the surface of adjacent cells. Interaction with the intracellular domain of ROBO1 mediates axon attraction towards cells expressing NTN1. Mediates axon growth cone collapse and plays a repulsive role in neuron guidance via its interaction with UNC5B, and possibly also other UNC-5 family members. Promotes neurite outgrowth (in vitro). Mediates cell-cell contacts that promote an increase both in neurite number and in neurite length. Plays a role in the regulation of the density of glutamaergic synapses. Plays a role in fibroblast growth factor-mediated signaling cascades. Required for normal morphogenesis during embryonic development, but not for normal embryonic patterning. Required for normal ventral closure, headfold fusion and definitive endoderm migration during embryonic development. Required for the formation of a normal basement membrane and the maintenance of a normal anterior visceral endoderm during embryonic development. The polypeptide is Leucine-rich repeat transmembrane protein FLRT3 (FLRT3) (Homo sapiens (Human)).